The chain runs to 461 residues: Cyclic 2,3-diphosphoglycerate synthetase (461 aa).

The protein belongs to the cyclic 2,3-diphosphoglycerate synthetase family.

The protein localises to the cytoplasm. The catalysed reaction is (2R)-2,3-bisphosphoglycerate + ATP + H(+) = cyclic (2R)-2,3-bisphosphoglycerate + ADP + phosphate. Catalyzes the formation of cyclic 2,3-diphosphoglycerate (cDPG) by formation of an intramolecular phosphoanhydride bond at the expense of ATP. The chain is Cyclic 2,3-diphosphoglycerate synthetase from Methanosphaera stadtmanae (strain ATCC 43021 / DSM 3091 / JCM 11832 / MCB-3).